The chain runs to 588 residues: Sperm-associated microtubule inner protein 4 (588 aa).

A Phosphothreonine modification is found at Thr219. Phosphoserine is present on residues Ser224, Ser406, Ser421, Ser427, and Ser437. Tyr441 bears the Phosphotyrosine mark. Phosphoserine is present on residues Ser457 and Ser484. At Thr512 the chain carries Phosphothreonine. Phosphoserine is present on Ser516. Residue Lys543 forms a Glycyl lysine isopeptide (Lys-Gly) (interchain with G-Cter in SUMO2) linkage. At Ser545 the chain carries Phosphoserine.

It is found in the cytoplasm. Its subcellular location is the cytoskeleton. The protein localises to the microtubule organizing center. It localises to the centrosome. The protein resides in the flagellum axoneme. Functionally, microtubule inner protein (MIP) part of the dynein-decorated doublet microtubules (DMTs) in flagellum axoneme. May serve to reinforce and thus stabilize the microtubule structure in the sperm flagella. This is Sperm-associated microtubule inner protein 4 (Spmip4) from Rattus norvegicus (Rat).